The following is a 301-amino-acid chain: NAD kinase 2 (301 aa).

D77 acts as the Proton acceptor in catalysis. NAD(+)-binding positions include 77 to 78 (DG), R82, 151 to 152 (NE), R162, D181, and 192 to 197 (TAYAFS).

Belongs to the NAD kinase family. A divalent metal cation serves as cofactor.

It localises to the cytoplasm. The catalysed reaction is NAD(+) + ATP = ADP + NADP(+) + H(+). Functionally, involved in the regulation of the intracellular balance of NAD and NADP, and is a key enzyme in the biosynthesis of NADP. Catalyzes specifically the phosphorylation on 2'-hydroxyl of the adenosine moiety of NAD to yield NADP. This is NAD kinase 2 from Streptomyces avermitilis (strain ATCC 31267 / DSM 46492 / JCM 5070 / NBRC 14893 / NCIMB 12804 / NRRL 8165 / MA-4680).